Consider the following 448-residue polypeptide: Phosphoglucosamine mutase (448 aa).

The Phosphoserine intermediate role is filled by Ser104. Mg(2+) contacts are provided by Ser104, Asp241, Asp243, and Asp245. A Phosphoserine modification is found at Ser104.

The protein belongs to the phosphohexose mutase family. The cofactor is Mg(2+). Activated by phosphorylation.

It carries out the reaction alpha-D-glucosamine 1-phosphate = D-glucosamine 6-phosphate. Catalyzes the conversion of glucosamine-6-phosphate to glucosamine-1-phosphate. This chain is Phosphoglucosamine mutase, found in Nocardioides sp. (strain ATCC BAA-499 / JS614).